Here is a 20-residue protein sequence, read N- to C-terminus: VVGGDECNINEHRSLALMYA.

The Peptidase S1 domain occupies 1–20; the sequence is VVGGDECNINEHRSLALMYA.

The protein belongs to the peptidase S1 family. Snake venom subfamily. In terms of assembly, monomer. In terms of processing, glycosylated. Expressed by the venom gland.

It localises to the secreted. Its activity is regulated as follows. Inhibited by calcium. Snake venom serine protease that selectively cleaves the heavy chain of protein C (PROC). This activation is thrombomodulin-independent. This Agkistrodon bilineatus (Cantil) protein is Protein C activator.